Reading from the N-terminus, the 136-residue chain is Large ribosomal subunit protein uL16 (136 aa).

Belongs to the universal ribosomal protein uL16 family. Part of the 50S ribosomal subunit.

Functionally, binds 23S rRNA and is also seen to make contacts with the A and possibly P site tRNAs. The polypeptide is Large ribosomal subunit protein uL16 (Psychromonas ingrahamii (strain DSM 17664 / CCUG 51855 / 37)).